Reading from the N-terminus, the 567-residue chain is MFS-type transporter poxA (567 aa).

Over residues 1–23 (MPASDRTSETGDVEKVTAAETPK) the composition is skewed to basic and acidic residues. Residues 1–24 (MPASDRTSETGDVEKVTAAETPKE) are disordered. A run of 10 helical transmembrane segments spans residues 35–55 (ALTG…LFLG), 77–97 (ADIG…QLLA), 108–128 (LVFL…GVAV), 141–161 (GAGA…VVPL), 165–185 (SLIL…GPVI), 197–217 (WCFY…ILFF), 240–260 (LAGC…LQWG), 271–291 (SATI…FLIW), 311–331 (IIAS…VGYF), and 349–369 (VMLL…GVIV). Asn370 carries an N-linked (GlcNAc...) asparagine glycan. 4 consecutive transmembrane segments (helical) span residues 372–392 (TGYF…GSGL), 410–430 (ILQG…QVAL), 436–456 (LIPV…SIML), and 515–535 (AIAG…LVSF). Positions 547-567 (EENKKEAAEEEEEVKVAAVEA) are disordered.

The protein belongs to the major facilitator superfamily. TCR/Tet family.

It localises to the cell membrane. MFS-type transporter; part of the gene cluster that mediates the biosynthesis of oxaleimides, cytotoxic compounds containing an unusual disubstituted succinimide moiety. The chain is MFS-type transporter poxA from Penicillium oxalicum (strain 114-2 / CGMCC 5302) (Penicillium decumbens).